The chain runs to 188 residues: Large ribosomal subunit protein eL18 (188 aa).

The tract at residues 143 to 188 is disordered; the sequence is RSAREAEKHFGPAPGVPHSHTKPHVRSKGRKFERARGRRASRAYKN. Composition is skewed to basic residues over residues 161-171 and 178-188; these read SHTKPHVRSKG and RGRRASRAYKN.

Belongs to the eukaryotic ribosomal protein eL18 family.

Its subcellular location is the cytoplasm. This Caenorhabditis briggsae protein is Large ribosomal subunit protein eL18 (rpl-18).